Here is a 61-residue protein sequence, read N- to C-terminus: Small ribosomal subunit protein eS30A (61 aa).

Residues 1 to 36 (MGKVHGSLARAGKVKSQTPKVEKQEKPKQPKGRAYK) are disordered.

This sequence belongs to the eukaryotic ribosomal protein eS30 family. As to quaternary structure, component of the small ribosomal subunit (SSU). Mature yeast ribosomes consist of a small (40S) and a large (60S) subunit. The 40S small subunit contains 1 molecule of ribosomal RNA (18S rRNA) and at least 33 different proteins. The large 60S subunit contains 3 rRNA molecules (25S, 5.8S and 5S rRNA) and at least 46 different proteins.

It is found in the cytoplasm. The protein resides in the nucleus. Functionally, component of the ribosome, a large ribonucleoprotein complex responsible for the synthesis of proteins in the cell. The small ribosomal subunit (SSU) binds messenger RNAs (mRNAs) and translates the encoded message by selecting cognate aminoacyl-transfer RNA (tRNA) molecules. The large subunit (LSU) contains the ribosomal catalytic site termed the peptidyl transferase center (PTC), which catalyzes the formation of peptide bonds, thereby polymerizing the amino acids delivered by tRNAs into a polypeptide chain. The nascent polypeptides leave the ribosome through a tunnel in the LSU and interact with protein factors that function in enzymatic processing, targeting, and the membrane insertion of nascent chains at the exit of the ribosomal tunnel. The protein is Small ribosomal subunit protein eS30A (rps3001) of Schizosaccharomyces pombe (strain 972 / ATCC 24843) (Fission yeast).